The chain runs to 184 residues: Signal peptidase I S (184 aa).

Topologically, residues 1 to 18 (MKSENVSKKKSILEWAKA) are cytoplasmic. A helical membrane pass occupies residues 19–39 (IVIAVVLALLIRNFIFAPYVV). Residues 40–184 (DGDSMYPTLH…YPFNEMRKTN (145 aa)) are Extracellular-facing. Catalysis depends on residues serine 43 and lysine 83.

Belongs to the peptidase S26 family.

The protein resides in the cell membrane. The enzyme catalyses Cleavage of hydrophobic, N-terminal signal or leader sequences from secreted and periplasmic proteins.. Not essential for cell viability, but required for efficient secretion of many proteins. The chain is Signal peptidase I S (sipS) from Bacillus subtilis (strain 168).